A 287-amino-acid chain; its full sequence is Protein-export membrane protein SecF (287 aa).

6 consecutive transmembrane segments (helical) span residues 21 to 41 (LIAIPAAITVIALLLVVFNGL), 129 to 149 (QIYWAIGFAFLFMSVTVFIIF), 158 to 178 (VILAAASDIIIAVGGMSLFGI), 182 to 202 (LASVGAILMLIGYSVDTDILL), 226 to 246 (VTMSIAAIASMAALYLVTVFV), and 259 to 279 (VLIIGLLADILTTWLMNLGIL).

Belongs to the SecD/SecF family. SecF subfamily. In terms of assembly, part of the protein translocation apparatus. Forms a complex with SecD.

It is found in the cell membrane. Functionally, involved in protein export. The polypeptide is Protein-export membrane protein SecF (Methanothermobacter thermautotrophicus (strain ATCC 29096 / DSM 1053 / JCM 10044 / NBRC 100330 / Delta H) (Methanobacterium thermoautotrophicum)).